The chain runs to 433 residues: ATP-dependent protease ATPase subunit HslU (433 aa).

Residues Val-18, 60-65, Asp-246, Glu-311, and Arg-383 contribute to the ATP site; that span reads GVGKTE.

The protein belongs to the ClpX chaperone family. HslU subfamily. As to quaternary structure, a double ring-shaped homohexamer of HslV is capped on each side by a ring-shaped HslU homohexamer. The assembly of the HslU/HslV complex is dependent on binding of ATP.

The protein localises to the cytoplasm. Functionally, ATPase subunit of a proteasome-like degradation complex; this subunit has chaperone activity. The binding of ATP and its subsequent hydrolysis by HslU are essential for unfolding of protein substrates subsequently hydrolyzed by HslV. HslU recognizes the N-terminal part of its protein substrates and unfolds these before they are guided to HslV for hydrolysis. The polypeptide is ATP-dependent protease ATPase subunit HslU (Rhodopseudomonas palustris (strain BisA53)).